The sequence spans 55 residues: Large ribosomal subunit protein bL33A (55 aa).

Belongs to the bacterial ribosomal protein bL33 family.

This is Large ribosomal subunit protein bL33A from Mycobacterium sp. (strain JLS).